A 432-amino-acid chain; its full sequence is Glutamate-1-semialdehyde 2,1-aminomutase 1 (432 aa).

Lysine 272 is subject to N6-(pyridoxal phosphate)lysine.

It belongs to the class-III pyridoxal-phosphate-dependent aminotransferase family. HemL subfamily. Homodimer. It depends on pyridoxal 5'-phosphate as a cofactor.

The protein resides in the cytoplasm. It catalyses the reaction (S)-4-amino-5-oxopentanoate = 5-aminolevulinate. It functions in the pathway porphyrin-containing compound metabolism; protoporphyrin-IX biosynthesis; 5-aminolevulinate from L-glutamyl-tRNA(Glu): step 2/2. In Exiguobacterium sp. (strain ATCC BAA-1283 / AT1b), this protein is Glutamate-1-semialdehyde 2,1-aminomutase 1.